Here is a 134-residue protein sequence, read N- to C-terminus: ATP synthase epsilon chain, chloroplastic (134 aa).

The protein belongs to the ATPase epsilon chain family. In terms of assembly, F-type ATPases have 2 components, CF(1) - the catalytic core - and CF(0) - the membrane proton channel. CF(1) has five subunits: alpha(3), beta(3), gamma(1), delta(1), epsilon(1). CF(0) has three main subunits: a, b and c.

Its subcellular location is the plastid. It localises to the chloroplast thylakoid membrane. In terms of biological role, produces ATP from ADP in the presence of a proton gradient across the membrane. This is ATP synthase epsilon chain, chloroplastic from Porphyra purpurea (Red seaweed).